A 90-amino-acid polypeptide reads, in one-letter code: U7-theraphotoxin-Hhn1a 3 (90 aa).

Positions 1 to 26 (MKTAIFTVVLALAVFAVLSFGWEANG) are cleaved as a signal peptide. Positions 27-50 (KALSEEFTELIHEKEAASETEARE) are excised as a propeptide. Disulfide bonds link C51/C65, C58/C70, and C64/C81.

It belongs to the neurotoxin 10 (Hwtx-1) family. 13 (Hntx-13) subfamily. Expressed by the venom gland.

It localises to the secreted. In terms of biological role, ion channel inhibitor. The chain is U7-theraphotoxin-Hhn1a 3 from Cyriopagopus hainanus (Chinese bird spider).